Here is a 760-residue protein sequence, read N- to C-terminus: Transglutaminase-activating metalloprotease (760 aa).

The signal sequence occupies residues 1–33; sequence MRPTPQRRAVATGALVAVTAMLAVGVQTTSANA. 2 disordered regions span residues 32–59 and 228–265; these read NAGQDKAAHPAPRQSIHKPDPGAEPVKL and KQGTGNSQHSGQVQIGTTKSGSSYQMNDTTRGGHKTYN. Positions 34–229 are excised as a propeptide; that stretch reads GQDKAAHPAP…KLFEFQGVKQ (196 aa). Polar residues predominate over residues 228–257; it reads KQGTGNSQHSGQVQIGTTKSGSSYQMNDTT. Histidine 366 serves as a coordination point for Zn(2+). Glutamate 367 is an active-site residue. Positions 370 and 390 each coordinate Zn(2+). Residue histidine 454 is the Proton donor of the active site. The P/Homo B domain maps to 640 to 760; it reads TVNTTGGGSV…GTIDKWRLTF (121 aa).

This sequence belongs to the peptidase M4 family. Zn(2+) is required as a cofactor.

It is found in the secreted. Cleaves the N-terminal propeptide of transglutaminase thus activating it. The chain is Transglutaminase-activating metalloprotease from Streptomyces mobaraensis (Streptoverticillium mobaraense).